Consider the following 440-residue polypeptide: Chromosomal replication initiator protein DnaA (440 aa).

The domain I, interacts with DnaA modulators stretch occupies residues 1–69; sequence MKERILQEIK…VKVVLGNDAT (69 aa). The tract at residues 69–96 is domain II; it reads TFEITYEAFEPHSSYSEPLVKKRAVLLT. The segment at 97-313 is domain III, AAA+ region; it reads PLNPDYTFEN…GAIIKLLVYK (217 aa). ATP-binding residues include glycine 140, glycine 142, lysine 143, and threonine 144. The domain IV, binds dsDNA stretch occupies residues 314-440; sequence ETTGKEVDLK…GEISRRALSG (127 aa).

Belongs to the DnaA family. Oligomerizes as a right-handed, spiral filament on DNA at oriC.

Its subcellular location is the cytoplasm. Plays an essential role in the initiation and regulation of chromosomal replication. ATP-DnaA binds to the origin of replication (oriC) to initiate formation of the DNA replication initiation complex once per cell cycle. Binds the DnaA box (a 9 base pair repeat at the origin) and separates the double-stranded (ds)DNA. Forms a right-handed helical filament on oriC DNA; dsDNA binds to the exterior of the filament while single-stranded (ss)DNA is stabiized in the filament's interior. The ATP-DnaA-oriC complex binds and stabilizes one strand of the AT-rich DNA unwinding element (DUE), permitting loading of DNA polymerase. After initiation quickly degrades to an ADP-DnaA complex that is not apt for DNA replication. Binds acidic phospholipids. The chain is Chromosomal replication initiator protein DnaA from Thermotoga sp. (strain RQ2).